Here is a 335-residue protein sequence, read N- to C-terminus: Karyogamy protein KAR4 (335 aa).

Residues 1–25 form a disordered region; it reads MAFQDPTYDQNKSRHINNSHLQGPN. Positions 16-25 are enriched in polar residues; that stretch reads INNSHLQGPN.

This sequence belongs to the MT-A70-like family. In terms of assembly, component of the MIS (mRNA N6-methyladenosine (m6A) methylation) complex, at least composed of IME4, KAR4, MUM2, SLZ1, and VIR1. Interacts with VIR1.

It localises to the nucleus. Its subcellular location is the cytoplasm. Component of the MIS complex, a complex that mediates N6-methyladenosine (m6A) methylation of meiotic mRNAs and is required for initiation of meiosis, progression through the meiotic divisions and sporulation. May assist STE12 in the pheromone-dependent expression of KAR3 and CIK1. The chain is Karyogamy protein KAR4 (KAR4) from Saccharomyces cerevisiae (strain ATCC 204508 / S288c) (Baker's yeast).